The chain runs to 219 residues: Adenylate kinase (219 aa).

12 to 17 contacts ATP; sequence GAGKGT. An NMP region spans residues 32-61; that stretch reads STGDMLRAAVKAGTPIGLQAKAVMDAGELV. Residues threonine 33, arginine 38, 59-61, 87-90, and glutamine 94 contribute to the AMP site; these read ELV and GYPR. The segment at 128-165 is LID; sequence GRFSCARCGEGYHDRYKLPKVADICDVCGSKEFKRRPD. Arginine 129 serves as a coordination point for ATP. Positions 132, 135, 152, and 155 each coordinate Zn(2+). Residues arginine 162 and arginine 174 each contribute to the AMP site. An ATP-binding site is contributed by alanine 202.

It belongs to the adenylate kinase family. Monomer.

The protein localises to the cytoplasm. The enzyme catalyses AMP + ATP = 2 ADP. It functions in the pathway purine metabolism; AMP biosynthesis via salvage pathway; AMP from ADP: step 1/1. Functionally, catalyzes the reversible transfer of the terminal phosphate group between ATP and AMP. Plays an important role in cellular energy homeostasis and in adenine nucleotide metabolism. This chain is Adenylate kinase, found in Sphingopyxis alaskensis (strain DSM 13593 / LMG 18877 / RB2256) (Sphingomonas alaskensis).